A 398-amino-acid chain; its full sequence is Beta-1,6-galactosyltransferase GALT29A (398 aa).

The Cytoplasmic segment spans residues 1 to 6; sequence MKRSVR. Residues 7-27 form a helical; Signal-anchor for type II membrane protein membrane-spanning segment; sequence PLFSALLFAFFAATLICRVAI. At 28–398 the chain is on the lumenal side; the sequence is RRSSFSFASA…FKIPLVQVYH (371 aa). 2 N-linked (GlcNAc...) asparagine glycosylation sites follow: N221 and N346.

Belongs to the glycosyltransferase 29 family. Interacts with GALT31A.

Its subcellular location is the golgi apparatus membrane. In terms of biological role, galactosyltransferase involved in the biosynthesis of type II arabinogalactan. Possesses galactosyltransferase (GalT) activity in vitro, transferring galactose from UDP-galactose to a mixture of various oligosaccharides derived from arabinogalactan proteins. Forms a complex with GALT31A that can work cooperatively to enhance the activities of adding galactose residues at O6 positions to beta-1,6-galactan and beta-1,3-galactan. This Arabidopsis thaliana (Mouse-ear cress) protein is Beta-1,6-galactosyltransferase GALT29A.